A 364-amino-acid polypeptide reads, in one-letter code: WAT1-related protein At5g47470 (364 aa).

10 helical membrane-spanning segments follow: residues 28–48 (MVIV…SLLM), 59–79 (FTIV…FAIL), 93–113 (LIGK…SLFL), 124–144 (ATAM…IVGL), 158–178 (ILGT…HSTS), 197–217 (VVGC…VVLQ), 228–248 (ISLS…VLLL), 255–275 (VLAS…LAGA), 293–313 (PVFV…FAVL), and 319–339 (VSLG…LVLW). The EamA 1 domain maps to 40-172 (VYAGNSLLMS…LCVFGALAMS (133 aa)). Positions 219 to 338 (STLAEFPAPI…LMFVGLYLVL (120 aa)) constitute an EamA 2 domain.

The protein belongs to the drug/metabolite transporter (DMT) superfamily. Plant drug/metabolite exporter (P-DME) (TC 2.A.7.4) family.

It is found in the membrane. This is WAT1-related protein At5g47470 from Arabidopsis thaliana (Mouse-ear cress).